The following is a 392-amino-acid chain: Tryptophan synthase beta chain (392 aa).

Position 86 is an N6-(pyridoxal phosphate)lysine (Lys86).

The protein belongs to the TrpB family. In terms of assembly, tetramer of two alpha and two beta chains. Pyridoxal 5'-phosphate serves as cofactor.

It carries out the reaction (1S,2R)-1-C-(indol-3-yl)glycerol 3-phosphate + L-serine = D-glyceraldehyde 3-phosphate + L-tryptophan + H2O. Its pathway is amino-acid biosynthesis; L-tryptophan biosynthesis; L-tryptophan from chorismate: step 5/5. The beta subunit is responsible for the synthesis of L-tryptophan from indole and L-serine. In Methanocorpusculum labreanum (strain ATCC 43576 / DSM 4855 / Z), this protein is Tryptophan synthase beta chain.